A 616-amino-acid polypeptide reads, in one-letter code: Dihydroxy-acid dehydratase (616 aa).

Residue Asp81 participates in Mg(2+) binding. Residue Cys122 coordinates [2Fe-2S] cluster. Asp123 and Lys124 together coordinate Mg(2+). Lys124 bears the N6-carboxylysine mark. [2Fe-2S] cluster is bound at residue Cys195. Position 491 (Glu491) interacts with Mg(2+). Catalysis depends on Ser517, which acts as the Proton acceptor.

Belongs to the IlvD/Edd family. Homodimer. [2Fe-2S] cluster is required as a cofactor. The cofactor is Mg(2+).

The catalysed reaction is (2R)-2,3-dihydroxy-3-methylbutanoate = 3-methyl-2-oxobutanoate + H2O. The enzyme catalyses (2R,3R)-2,3-dihydroxy-3-methylpentanoate = (S)-3-methyl-2-oxopentanoate + H2O. It functions in the pathway amino-acid biosynthesis; L-isoleucine biosynthesis; L-isoleucine from 2-oxobutanoate: step 3/4. Its pathway is amino-acid biosynthesis; L-valine biosynthesis; L-valine from pyruvate: step 3/4. In terms of biological role, functions in the biosynthesis of branched-chain amino acids. Catalyzes the dehydration of (2R,3R)-2,3-dihydroxy-3-methylpentanoate (2,3-dihydroxy-3-methylvalerate) into 2-oxo-3-methylpentanoate (2-oxo-3-methylvalerate) and of (2R)-2,3-dihydroxy-3-methylbutanoate (2,3-dihydroxyisovalerate) into 2-oxo-3-methylbutanoate (2-oxoisovalerate), the penultimate precursor to L-isoleucine and L-valine, respectively. This Edwardsiella ictaluri (strain 93-146) protein is Dihydroxy-acid dehydratase.